The following is a 264-amino-acid chain: Thiazole synthase (264 aa).

The active-site Schiff-base intermediate with DXP is lysine 106. 1-deoxy-D-xylulose 5-phosphate contacts are provided by residues glycine 167, 193–194 (AG), and 215–216 (NS).

Belongs to the ThiG family. In terms of assembly, homotetramer. Forms heterodimers with either ThiH or ThiS.

Its subcellular location is the cytoplasm. It catalyses the reaction [ThiS sulfur-carrier protein]-C-terminal-Gly-aminoethanethioate + 2-iminoacetate + 1-deoxy-D-xylulose 5-phosphate = [ThiS sulfur-carrier protein]-C-terminal Gly-Gly + 2-[(2R,5Z)-2-carboxy-4-methylthiazol-5(2H)-ylidene]ethyl phosphate + 2 H2O + H(+). It functions in the pathway cofactor biosynthesis; thiamine diphosphate biosynthesis. Catalyzes the rearrangement of 1-deoxy-D-xylulose 5-phosphate (DXP) to produce the thiazole phosphate moiety of thiamine. Sulfur is provided by the thiocarboxylate moiety of the carrier protein ThiS. In vitro, sulfur can be provided by H(2)S. The chain is Thiazole synthase from Prochlorococcus marinus (strain AS9601).